The chain runs to 90 residues: Lectin-1 (90 aa).

Q1 carries the pyrrolidone carboxylic acid modification. The cysteines at positions 46 and 71 are disulfide-linked.

Post-translationally, the N-terminus is blocked. Contains seven disulfide bonds. In terms of processing, proteolytically cleaved. Major mature form may consist of cleaved, disulfide-bonded N-terminal and C-terminal chains.

Lectin with specificity for complex N-linked glycans and O-linked glycans. Has hemagglutinating activity towards rabbit erythrocytes. This is Lectin-1 from Hypnea musciformis (Red alga).